The following is a 382-amino-acid chain: Lipid-A-disaccharide synthase (382 aa).

The protein belongs to the LpxB family.

It carries out the reaction 2-N,3-O-bis[(3R)-3-hydroxytetradecanoyl]-alpha-D-glucosaminyl 1-phosphate + UDP-2-N,3-O-bis[(3R)-3-hydroxytetradecanoyl]-alpha-D-glucosamine = lipid A disaccharide (E. coli) + UDP + H(+). It catalyses the reaction a lipid X + a UDP-2-N,3-O-bis[(3R)-3-hydroxyacyl]-alpha-D-glucosamine = a lipid A disaccharide + UDP + H(+). The protein operates within glycolipid biosynthesis; lipid IV(A) biosynthesis; lipid IV(A) from (3R)-3-hydroxytetradecanoyl-[acyl-carrier-protein] and UDP-N-acetyl-alpha-D-glucosamine: step 5/6. Functionally, condensation of UDP-2,3-diacylglucosamine and 2,3-diacylglucosamine-1-phosphate to form lipid A disaccharide, a precursor of lipid A, a phosphorylated glycolipid that anchors the lipopolysaccharide to the outer membrane of the cell. The polypeptide is Lipid-A-disaccharide synthase (Escherichia coli O45:K1 (strain S88 / ExPEC)).